Here is a 614-residue protein sequence, read N- to C-terminus: 1-deoxy-D-xylulose-5-phosphate synthase (614 aa).

Residues histidine 76 and 117–119 (GHS) each bind thiamine diphosphate. Aspartate 148 lines the Mg(2+) pocket. Residues 149-150 (GA), asparagine 177, tyrosine 285, and glutamate 366 each bind thiamine diphosphate. A Mg(2+)-binding site is contributed by asparagine 177.

Belongs to the transketolase family. DXPS subfamily. In terms of assembly, homodimer. Requires Mg(2+) as cofactor. The cofactor is thiamine diphosphate.

The catalysed reaction is D-glyceraldehyde 3-phosphate + pyruvate + H(+) = 1-deoxy-D-xylulose 5-phosphate + CO2. It functions in the pathway metabolic intermediate biosynthesis; 1-deoxy-D-xylulose 5-phosphate biosynthesis; 1-deoxy-D-xylulose 5-phosphate from D-glyceraldehyde 3-phosphate and pyruvate: step 1/1. In terms of biological role, catalyzes the acyloin condensation reaction between C atoms 2 and 3 of pyruvate and glyceraldehyde 3-phosphate to yield 1-deoxy-D-xylulose-5-phosphate (DXP). In Pasteurella multocida (strain Pm70), this protein is 1-deoxy-D-xylulose-5-phosphate synthase.